Reading from the N-terminus, the 304-residue chain is Cytochrome c biogenesis protein CcsA (304 aa).

The next 8 membrane-spanning stretches (helical) occupy residues 8 to 28 (LVTS…PIAF), 37 to 57 (PGVV…QLVL), 63 to 83 (GHFP…ACTL), 96 to 116 (IVAA…SFAL), 141 to 161 (VIMV…AVLV), 212 to 232 (TITV…VWAN), 246 to 263 (TWAL…HTRL), and 275 to 295 (VAVV…LLGI).

This sequence belongs to the CcmF/CycK/Ccl1/NrfE/CcsA family. In terms of assembly, may interact with ccs1.

Its subcellular location is the cellular thylakoid membrane. Required during biogenesis of c-type cytochromes (cytochrome c6 and cytochrome f) at the step of heme attachment. The chain is Cytochrome c biogenesis protein CcsA from Synechococcus sp. (strain CC9902).